Reading from the N-terminus, the 308-residue chain is 26S proteasome regulatory subunit rpn11 (308 aa).

The MPN domain occupies 30–165; sequence VYISSLALLK…IDAFRLINPS (136 aa). Residues histidine 112, histidine 114, and aspartate 125 each coordinate Zn(2+). The short motif at 112-125 is the JAMM motif element; it reads HSHPGFGCWLSSVD.

It belongs to the peptidase M67A family. As to quaternary structure, the 26S proteasome is composed of a core protease, known as the 20S proteasome, capped at one or both ends by the 19S regulatory complex (RC). The RC is composed of at least 18 different subunits in two subcomplexes, the base and the lid, which form the portions proximal and distal to the 20S proteolytic core, respectively.

In terms of biological role, acts as a regulatory subunit of the 26 proteasome which is involved in the ATP-dependent degradation of ubiquitinated proteins. Transcription factor pap1 is controlled by the functional interaction between the positive regulator pad1 and negative regulator crm1. Both these proteins are also essential for cell viability and for the maintenance of chromosome structure. Pad1 is also responsible for resistance to staurosporine, and other drugs such as cycloheximide and caffeine. This Schizosaccharomyces pombe (strain 972 / ATCC 24843) (Fission yeast) protein is 26S proteasome regulatory subunit rpn11 (rpn11).